Reading from the N-terminus, the 663-residue chain is Bifunctional polymyxin resistance protein ArnA (663 aa).

A formyltransferase ArnAFT region spans residues 1–307 (MSPKAVVFAY…EFGLVEGSQL (307 aa)). His106 serves as the catalytic Proton donor; for formyltransferase activity. (6R)-10-formyltetrahydrofolate contacts are provided by residues Arg116 and 138-142 (VKRAD). Residues 317–663 (RRTRVLILGV…EAMAEKADMR (347 aa)) form a dehydrogenase ArnADH region. NAD(+) contacts are provided by residues Asp350 and 371–372 (DI). UDP-alpha-D-glucuronate contacts are provided by residues Ala396, Tyr401, and 435-436 (TS). Glu437 serves as the catalytic Proton acceptor; for decarboxylase activity. UDP-alpha-D-glucuronate-binding positions include Arg463, Asn494, 528 to 537 (RLVDGGAQKR), and Tyr615. Arg621 functions as the Proton donor; for decarboxylase activity in the catalytic mechanism.

This sequence in the N-terminal section; belongs to the Fmt family. UDP-L-Ara4N formyltransferase subfamily. It in the C-terminal section; belongs to the NAD(P)-dependent epimerase/dehydratase family. UDP-glucuronic acid decarboxylase subfamily. As to quaternary structure, homohexamer, formed by a dimer of trimers.

It catalyses the reaction UDP-alpha-D-glucuronate + NAD(+) = UDP-beta-L-threo-pentopyranos-4-ulose + CO2 + NADH. The enzyme catalyses UDP-4-amino-4-deoxy-beta-L-arabinose + (6R)-10-formyltetrahydrofolate = UDP-4-deoxy-4-formamido-beta-L-arabinose + (6S)-5,6,7,8-tetrahydrofolate + H(+). Its pathway is nucleotide-sugar biosynthesis; UDP-4-deoxy-4-formamido-beta-L-arabinose biosynthesis; UDP-4-deoxy-4-formamido-beta-L-arabinose from UDP-alpha-D-glucuronate: step 1/3. It participates in nucleotide-sugar biosynthesis; UDP-4-deoxy-4-formamido-beta-L-arabinose biosynthesis; UDP-4-deoxy-4-formamido-beta-L-arabinose from UDP-alpha-D-glucuronate: step 3/3. It functions in the pathway bacterial outer membrane biogenesis; lipopolysaccharide biosynthesis. Functionally, bifunctional enzyme that catalyzes the oxidative decarboxylation of UDP-glucuronic acid (UDP-GlcUA) to UDP-4-keto-arabinose (UDP-Ara4O) and the addition of a formyl group to UDP-4-amino-4-deoxy-L-arabinose (UDP-L-Ara4N) to form UDP-L-4-formamido-arabinose (UDP-L-Ara4FN). The modified arabinose is attached to lipid A and is required for resistance to polymyxin and cationic antimicrobial peptides. This chain is Bifunctional polymyxin resistance protein ArnA, found in Pseudomonas savastanoi pv. phaseolicola (strain 1448A / Race 6) (Pseudomonas syringae pv. phaseolicola (strain 1448A / Race 6)).